Reading from the N-terminus, the 270-residue chain is tRNA pseudouridine synthase A (270 aa).

The active-site Nucleophile is the Asp-60. Tyr-118 contacts substrate.

The protein belongs to the tRNA pseudouridine synthase TruA family. As to quaternary structure, homodimer.

It catalyses the reaction uridine(38/39/40) in tRNA = pseudouridine(38/39/40) in tRNA. In terms of biological role, formation of pseudouridine at positions 38, 39 and 40 in the anticodon stem and loop of transfer RNAs. The protein is tRNA pseudouridine synthase A of Salmonella typhimurium (strain LT2 / SGSC1412 / ATCC 700720).